Here is a 725-residue protein sequence, read N- to C-terminus: mRNA decay activator protein ZFP36L3 (725 aa).

Positions 1–25 (MANNNLNRPLNTNVADSSNSSSTPG) are enriched in low complexity. Residues 1–119 (MANNNLNRPL…KVSGSSSLAT (119 aa)) are disordered. Polar residues-rich tracts occupy residues 42-72 (APSS…QSGA) and 100-119 (HSLQ…SLAT). 2 C3H1-type zinc fingers span residues 122–150 (RYKT…HGYR) and 160–188 (KYKT…HNQP). Residues 193–711 (VLSESTLEEP…ESEFDNTNSS (519 aa)) form a necessary for cytoplasmic localization region. The interval 276 to 310 (STTAHDADKDPDKDADKDPSNNSANDALAFPQEPG) is disordered. A compositionally biased stretch (basic and acidic residues) spans 280–294 (HDADKDPDKDADKDP). 4 helical membrane passes run 380 to 400 (LAPA…AMAL), 420 to 440 (AALA…GAAM), 441 to 461 (APGA…MATG), and 468 to 488 (AAMA…GAAV). Positions 686 to 709 (DEDDFLRRSSSSSSLNESEFDNTN) are disordered. The segment covering 693-702 (RSSSSSSLNE) has biased composition (low complexity).

Expressed in placenta and extraembryonic tissues (at protein level). Not detected in embryos and fetus.

It localises to the cytoplasm. Its subcellular location is the membrane. Its function is as follows. Placenta-specific zinc-finger RNA-binding protein that destabilizes cytoplasmic AU-rich element (ARE)-containing mRNA transcripts by promoting their poly(A) tail removal or deadenylation, and hence provide a mechanism for attenuating protein synthesis. Binds to the 3'-UTR ARE of placental target mRNAs, such as TNF, HBEGF and LIPG. Involved in placental expression of many genes important for normal placental physiology. The protein is mRNA decay activator protein ZFP36L3 of Mus musculus (Mouse).